The following is a 337-amino-acid chain: Aspartate carbamoyltransferase catalytic subunit (337 aa).

R59 and T60 together coordinate carbamoyl phosphate. Position 87 (K87) interacts with L-aspartate. Carbamoyl phosphate contacts are provided by R109, H142, and Q145. L-aspartate-binding residues include R182 and R253. Carbamoyl phosphate contacts are provided by G294 and P295.

This sequence belongs to the aspartate/ornithine carbamoyltransferase superfamily. ATCase family. In terms of assembly, heterododecamer (2C3:3R2) of six catalytic PyrB chains organized as two trimers (C3), and six regulatory PyrI chains organized as three dimers (R2).

The enzyme catalyses carbamoyl phosphate + L-aspartate = N-carbamoyl-L-aspartate + phosphate + H(+). The protein operates within pyrimidine metabolism; UMP biosynthesis via de novo pathway; (S)-dihydroorotate from bicarbonate: step 2/3. Functionally, catalyzes the condensation of carbamoyl phosphate and aspartate to form carbamoyl aspartate and inorganic phosphate, the committed step in the de novo pyrimidine nucleotide biosynthesis pathway. The polypeptide is Aspartate carbamoyltransferase catalytic subunit (Prochlorococcus marinus (strain MIT 9211)).